The chain runs to 441 residues: Methionine aminopeptidase 2A (441 aa).

The disordered stretch occupies residues 1–103; that stretch reads MAIGNPEVAT…SGDFPQGEIQ (103 aa). Residues 18-33 show a composition bias toward polar residues; sequence AESSNGNESQLSSDLT. Residues 37–62 show a composition bias toward basic and acidic residues; it reads DLAEVKEDEKDNNQEEEDGLKAEAST. The span at 63–76 shows a compositional bias: basic residues; that stretch reads KKKKKKSKSKKKKS. His-194 is a binding site for substrate. Residues Asp-214, Asp-225, and His-294 each coordinate a divalent metal cation. Residue His-302 coordinates substrate. A divalent metal cation contacts are provided by Glu-327 and Glu-422.

This sequence belongs to the peptidase M24A family. Methionine aminopeptidase eukaryotic type 2 subfamily. Requires Co(2+) as cofactor. The cofactor is Zn(2+). Mn(2+) serves as cofactor. Fe(2+) is required as a cofactor. As to expression, ubiquitous. Preferentially expressed in roots.

Its subcellular location is the cytoplasm. The catalysed reaction is Release of N-terminal amino acids, preferentially methionine, from peptides and arylamides.. Its function is as follows. Cotranslationally removes the N-terminal methionine from nascent proteins. The N-terminal methionine is often cleaved when the second residue in the primary sequence is small and uncharged (Met-Ala-, Cys, Gly, Pro, Ser, Thr, or Val). This chain is Methionine aminopeptidase 2A, found in Arabidopsis thaliana (Mouse-ear cress).